A 499-amino-acid chain; its full sequence is Type-1 glutamine synthetase 1 (499 aa).

The GS beta-grasp domain maps to 50 to 146; sequence PQLKFIRVCW…IFGEFFYLDN (97 aa). Positions 158 to 499 constitute a GS catalytic domain; it reads PRNSLQRAID…DQILKLLELF (342 aa).

Belongs to the glutamine synthetase family.

It catalyses the reaction L-glutamate + NH4(+) + ATP = L-glutamine + ADP + phosphate + H(+). The sequence is that of Type-1 glutamine synthetase 1 (glnA1) from Dictyostelium discoideum (Social amoeba).